A 189-amino-acid polypeptide reads, in one-letter code: Putative manganese efflux pump MntP (189 aa).

6 helical membrane passes run 3 to 23 (IVST…AAVS), 41 to 61 (MIFG…GRVA), 62 to 82 (ADYV…FLGI), 103 to 123 (SFIL…SVGV), 132 to 152 (IVPV…AGVM), and 167 to 187 (IIGG…HLYG).

It belongs to the MntP (TC 9.B.29) family.

It localises to the cell inner membrane. Probably functions as a manganese efflux pump. The sequence is that of Putative manganese efflux pump MntP from Methylobacillus flagellatus (strain ATCC 51484 / DSM 6875 / VKM B-1610 / KT).